Reading from the N-terminus, the 298-residue chain is Syntenin-1 (298 aa).

Ser2 is subject to N-acetylserine. The tract at residues 2–60 (SLYPSLEDLKVDKVIQAQTAFSANPANPAILSEASAPIPHDGNLYPRLYPELSQYMGLS) is interaction with PDCD6IP. Short sequence motifs (LYPX(n)L motif) lie at residues 3 to 7 (LYPSL), 45 to 49 (LYPRL), and 49 to 53 (LYPEL). Ser6 bears the Phosphoserine mark. Tyr46 is subject to Phosphotyrosine. PDZ domains follow at residues 114–193 (EVIL…IRDR) and 198–273 (TITM…MPAF). Residues Asn215 and 250–251 (KD) each bind a 1,2-diacyl-sn-glycero-3-phospho-(1D-myo-inositol-4,5-bisphosphate).

In terms of assembly, monomer and homodimer. Interacts with SDC1, SDC2, SDC3, SDC4, NRXN2, EPHA7, EPHB1, NF2 isoform 1, TGFA and IL5RA. Interacts with NFASC and PTPRJ. Interacts with SDCBP2. Interacts with PDCD6IP. Forms a complex with PDCD6IP and SDC2. Interacts (via C-terminus) with TGFBR1. Binds to FZD7; this interaction is increased by inositol trisphosphate (IP3). Interacts with SMO. Post-translationally, phosphorylated on tyrosine residues. Expressed in lung cancers, including adenocarcinoma, squamous cell carcinoma and small-cell carcinoma (at protein level). Widely expressed. Expressed in fetal kidney, liver, lung and brain. In adult highest expression in heart and placenta.

It is found in the cell junction. The protein resides in the focal adhesion. Its subcellular location is the adherens junction. It localises to the cell membrane. The protein localises to the endoplasmic reticulum membrane. It is found in the nucleus. The protein resides in the melanosome. Its subcellular location is the cytoplasm. It localises to the cytosol. The protein localises to the cytoskeleton. It is found in the secreted. The protein resides in the extracellular exosome. Its subcellular location is the membrane raft. Functionally, multifunctional adapter protein involved in diverse array of functions including trafficking of transmembrane proteins, neuro and immunomodulation, exosome biogenesis, and tumorigenesis. Positively regulates TGFB1-mediated SMAD2/3 activation and TGFB1-induced epithelial-to-mesenchymal transition (EMT) and cell migration in various cell types. May increase TGFB1 signaling by enhancing cell-surface expression of TGFR1 by preventing the interaction between TGFR1 and CAV1 and subsequent CAV1-dependent internalization and degradation of TGFR1. In concert with SDC1/4 and PDCD6IP, regulates exosome biogenesis. Regulates migration, growth, proliferation, and cell cycle progression in a variety of cancer types. In adherens junctions may function to couple syndecans to cytoskeletal proteins or signaling components. Seems to couple transcription factor SOX4 to the IL-5 receptor (IL5RA). May also play a role in vesicular trafficking. Seems to be required for the targeting of TGFA to the cell surface in the early secretory pathway. The chain is Syntenin-1 (SDCBP) from Homo sapiens (Human).